A 305-amino-acid polypeptide reads, in one-letter code: UDP-3-O-acyl-N-acetylglucosamine deacetylase (305 aa).

Positions 79, 238, and 242 each coordinate Zn(2+). Histidine 265 acts as the Proton donor in catalysis.

This sequence belongs to the LpxC family. It depends on Zn(2+) as a cofactor.

It catalyses the reaction a UDP-3-O-[(3R)-3-hydroxyacyl]-N-acetyl-alpha-D-glucosamine + H2O = a UDP-3-O-[(3R)-3-hydroxyacyl]-alpha-D-glucosamine + acetate. It participates in glycolipid biosynthesis; lipid IV(A) biosynthesis; lipid IV(A) from (3R)-3-hydroxytetradecanoyl-[acyl-carrier-protein] and UDP-N-acetyl-alpha-D-glucosamine: step 2/6. Functionally, catalyzes the hydrolysis of UDP-3-O-myristoyl-N-acetylglucosamine to form UDP-3-O-myristoylglucosamine and acetate, the committed step in lipid A biosynthesis. The polypeptide is UDP-3-O-acyl-N-acetylglucosamine deacetylase (Proteus mirabilis (strain HI4320)).